We begin with the raw amino-acid sequence, 103 residues long: Large ribosomal subunit protein bL21 (103 aa).

It belongs to the bacterial ribosomal protein bL21 family. As to quaternary structure, part of the 50S ribosomal subunit. Contacts protein L20.

In terms of biological role, this protein binds to 23S rRNA in the presence of protein L20. This chain is Large ribosomal subunit protein bL21, found in Lactobacillus acidophilus (strain ATCC 700396 / NCK56 / N2 / NCFM).